The primary structure comprises 342 residues: Cathepsin B-like cysteine proteinase (342 aa).

The first 17 residues, 1 to 17 (MLKIAVYIVSLFTFLEA), serve as a signal peptide directing secretion. A propeptide spans 18–89 (HVTTRNNQRI…TVDHHDLNVE (72 aa)) (activation peptide). 6 disulfides stabilise this stretch: Cys103–Cys132, Cys115–Cys159, Cys151–Cys217, Cys152–Cys155, Cys188–Cys221, and Cys196–Cys207. Cys118 is an active-site residue. Catalysis depends on residues His288 and Asn308.

It belongs to the peptidase C1 family. As to expression, intestine (gut).

Thiol protease. Has a role as a digestive enzyme. The protein is Cathepsin B-like cysteine proteinase (CATB) of Schistosoma japonicum (Blood fluke).